A 200-amino-acid polypeptide reads, in one-letter code: Small ribosomal subunit protein uS4 (200 aa).

A disordered region spans residues 22–41 (TGKELQKRPYAPGQHGPNQR). One can recognise an S4 RNA-binding domain in the interval 92-152 (SRLDNLVYRM…EKSRNLQVIK (61 aa)).

The protein belongs to the universal ribosomal protein uS4 family. In terms of assembly, part of the 30S ribosomal subunit. Contacts protein S5. The interaction surface between S4 and S5 is involved in control of translational fidelity.

In terms of biological role, one of the primary rRNA binding proteins, it binds directly to 16S rRNA where it nucleates assembly of the body of the 30S subunit. With S5 and S12 plays an important role in translational accuracy. This Halalkalibacterium halodurans (strain ATCC BAA-125 / DSM 18197 / FERM 7344 / JCM 9153 / C-125) (Bacillus halodurans) protein is Small ribosomal subunit protein uS4.